We begin with the raw amino-acid sequence, 292 residues long: GTP cyclohydrolase FolE2 (292 aa).

It belongs to the GTP cyclohydrolase IV family.

The catalysed reaction is GTP + H2O = 7,8-dihydroneopterin 3'-triphosphate + formate + H(+). Its pathway is cofactor biosynthesis; 7,8-dihydroneopterin triphosphate biosynthesis; 7,8-dihydroneopterin triphosphate from GTP: step 1/1. Functionally, converts GTP to 7,8-dihydroneopterin triphosphate. The polypeptide is GTP cyclohydrolase FolE2 (Staphylococcus saprophyticus subsp. saprophyticus (strain ATCC 15305 / DSM 20229 / NCIMB 8711 / NCTC 7292 / S-41)).